Consider the following 981-residue polypeptide: Alpha-mannosidase (981 aa).

Histidine 23, aspartate 25, and aspartate 145 together coordinate Zn(2+). Residue aspartate 145 is the Nucleophile of the active site. Asparagine 312 carries N-linked (GlcNAc...) asparagine glycosylation. Histidine 386 contributes to the Zn(2+) binding site. Intrachain disulfides connect cysteine 422–cysteine 432, cysteine 442–cysteine 450, and cysteine 800–cysteine 807. N-linked (GlcNAc...) asparagine glycosylation is present at asparagine 446. Residues lysine 938–glycine 957 form a disordered region.

Belongs to the glycosyl hydrolase 38 family. Dimer of dimers of heavy and light subunits. Zn(2+) serves as cofactor. In terms of processing, produced as a precursor which is then proteolytically cleaved into a 66kD heavy subunit and a 44kD light subunit. Cleavage probably occurs in protein bodies/protein storage vacuoles.

The protein resides in the protein storage vacuole. The catalysed reaction is Hydrolysis of terminal, non-reducing alpha-D-mannose residues in alpha-D-mannosides.. Inhibited by 2,3,4,6-tetra-O-acetyl-5-fluoro-beta-L-gulopyranosyl fluoride which acts as a slow substrate, doubling as a competitive inhibitor as it forms a high steady state concentration of glycosyl-enzyme intermediate that blocks the active site. Inhibited by 2,3,4,6-tetra-O-acetyl-5-fluoro-alpha-D-mannopyranosyl fluoride which also acts as a slow substrate but no intermediates accumulate. Inhibited by EDTA. Inhibited by metal ion Cu(2+). Inhibited by metal ions Fe(2+), Cd(2+) and Co(2+). Inhibited by metal ions Ag(+) and Hg(2+). Competitively inhibited by mannono-1-4-lactone and mannono-1-5-lactone. Inhibited by swainsonine but not by 1-desoxymannojirimycin. Inhibited by pyrrolidine-3,4-diol derivatives. Functionally, liberates mannose from p-nitrophenyl-alpha-D-mannoside. Liberates mannose from further alpha-D-mannosides including methyl-, benzyl-alpha-D-mannoside, 1-6-linked di-, tri- and tetrasaccharides of alpha-D-mannose and mannosyl-rhamnose. Liberates mannose from various glycoproteins like ovalbumin and ovomucoid. Does not hydrolyze beta-D-mannosides. Has glycosyltransferase activity, forming disaccharides from mannose and lyxose but not from glucose, galactose, ribose, xylose or arabinose. In Canavalia ensiformis (Jack bean), this protein is Alpha-mannosidase.